The sequence spans 209 residues: Bcl-2 homologous antagonist/killer (209 aa).

The tract at residues 1 to 28 is disordered; that stretch reads MASGQGPGPPKVGCDESPSPSEQQVAQD. N-acetylalanine is present on A2. The span at 18-27 shows a compositional bias: polar residues; the sequence is PSPSEQQVAQ. The short motif at 72–86 is the BH3 element; it reads VGRQLALIGDDINRR. The BH1 motif lies at 115-134; the sequence is SLFKSGISWGRVVALLGFGY. Zn(2+) is bound by residues D158 and H162. Residues 167–182 carry the BH2 motif; that stretch reads RWIAQRGGWVAALNFR. A helical membrane pass occupies residues 186–203; it reads ILTVMVIFGVVLLGQFVV.

This sequence belongs to the Bcl-2 family. As to quaternary structure, homodimer. Formation of the homodimer is zinc-dependent. Forms heterodimers with BCL2 and BCL2L1 isoform Bcl-X(L). Forms heterooligomers with BAX. Interacts with BCL2A1. Interacts withRTL10/BOP. Interacts with VDAC1. Interacts with GIMAP3/IAN4 and GIMAP5/IAN5. (Microbial infection) Interacts with gamma-herpesvirus 68 protein vBCL2. In terms of tissue distribution, widely expressed.

The protein resides in the mitochondrion outer membrane. Its function is as follows. In the presence of an appropriate stimulus, accelerates programmed cell death by binding to, and antagonizing the anti-apoptotic action of BCL2. The sequence is that of Bcl-2 homologous antagonist/killer (Bak1) from Mus musculus (Mouse).